Consider the following 31-residue polypeptide: Cyclotide cter-D (31 aa).

Positions 1-31 (GIPCAESCVWIPCTVTALLGCSCKDKVCYLN) form a cross-link, cyclopeptide (Gly-Asn). 3 disulfide bridges follow: Cys-4–Cys-21, Cys-8–Cys-23, and Cys-13–Cys-28.

In terms of processing, contains 3 disulfide bonds. Post-translationally, this is a cyclic peptide. As to expression, expressed in root, seed and nodule but not in flower, stem, shoot, leaf and pod.

Functionally, probably participates in a plant defense mechanism. In Clitoria ternatea (Butterfly pea), this protein is Cyclotide cter-D.